The sequence spans 115 residues: Phosphoribosyl-AMP cyclohydrolase (115 aa).

Position 80 (Asp-80) interacts with Mg(2+). Cys-81 is a Zn(2+) binding site. Positions 82 and 84 each coordinate Mg(2+). Residues Cys-97 and Cys-104 each coordinate Zn(2+).

It belongs to the PRA-CH family. Homodimer. Mg(2+) serves as cofactor. Requires Zn(2+) as cofactor.

The protein resides in the cytoplasm. The enzyme catalyses 1-(5-phospho-beta-D-ribosyl)-5'-AMP + H2O = 1-(5-phospho-beta-D-ribosyl)-5-[(5-phospho-beta-D-ribosylamino)methylideneamino]imidazole-4-carboxamide. It functions in the pathway amino-acid biosynthesis; L-histidine biosynthesis; L-histidine from 5-phospho-alpha-D-ribose 1-diphosphate: step 3/9. Functionally, catalyzes the hydrolysis of the adenine ring of phosphoribosyl-AMP. This is Phosphoribosyl-AMP cyclohydrolase from Mycobacterium leprae (strain Br4923).